Here is a 333-residue protein sequence, read N- to C-terminus: N-acetyl-gamma-glutamyl-phosphate reductase (333 aa).

The active site involves cysteine 145.

This sequence belongs to the NAGSA dehydrogenase family. Type 1 subfamily.

The protein resides in the cytoplasm. It catalyses the reaction N-acetyl-L-glutamate 5-semialdehyde + phosphate + NADP(+) = N-acetyl-L-glutamyl 5-phosphate + NADPH + H(+). It participates in amino-acid biosynthesis; L-arginine biosynthesis; N(2)-acetyl-L-ornithine from L-glutamate: step 3/4. Its function is as follows. Catalyzes the NADPH-dependent reduction of N-acetyl-5-glutamyl phosphate to yield N-acetyl-L-glutamate 5-semialdehyde. The protein is N-acetyl-gamma-glutamyl-phosphate reductase of Salinispora tropica (strain ATCC BAA-916 / DSM 44818 / JCM 13857 / NBRC 105044 / CNB-440).